The following is a 294-amino-acid chain: Cytidine deaminase (294 aa).

CMP/dCMP-type deaminase domains follow at residues 48 to 168 (DEDA…FGPK) and 186 to 294 (LTGD…VLLA). A substrate-binding site is contributed by 89–91 (NME). Histidine 102 contacts Zn(2+). The active-site Proton donor is glutamate 104. Residues cysteine 129 and cysteine 132 each contribute to the Zn(2+) site.

This sequence belongs to the cytidine and deoxycytidylate deaminase family. In terms of assembly, homodimer. Zn(2+) serves as cofactor.

The enzyme catalyses cytidine + H2O + H(+) = uridine + NH4(+). The catalysed reaction is 2'-deoxycytidine + H2O + H(+) = 2'-deoxyuridine + NH4(+). Functionally, this enzyme scavenges exogenous and endogenous cytidine and 2'-deoxycytidine for UMP synthesis. The polypeptide is Cytidine deaminase (Escherichia coli O17:K52:H18 (strain UMN026 / ExPEC)).